Here is a 463-residue protein sequence, read N- to C-terminus: Asparagine--tRNA ligase (463 aa).

It belongs to the class-II aminoacyl-tRNA synthetase family. As to quaternary structure, homodimer.

The protein localises to the cytoplasm. It catalyses the reaction tRNA(Asn) + L-asparagine + ATP = L-asparaginyl-tRNA(Asn) + AMP + diphosphate + H(+). This chain is Asparagine--tRNA ligase, found in Desulfitobacterium hafniense (strain Y51).